The primary structure comprises 800 residues: DNA topoisomerase 4 subunit A (800 aa).

The Topo IIA-type catalytic domain maps to 31–495 (LPDVRDGLKP…EIEEIKIDKE (465 aa)). The O-(5'-phospho-DNA)-tyrosine intermediate role is filled by Tyr119.

This sequence belongs to the type II topoisomerase GyrA/ParC subunit family. ParC type 2 subfamily. As to quaternary structure, heterotetramer composed of ParC and ParE.

It is found in the cell membrane. The catalysed reaction is ATP-dependent breakage, passage and rejoining of double-stranded DNA.. In terms of biological role, topoisomerase IV is essential for chromosome segregation. It relaxes supercoiled DNA. Performs the decatenation events required during the replication of a circular DNA molecule. The polypeptide is DNA topoisomerase 4 subunit A (Staphylococcus aureus (strain MRSA252)).